Here is a 77-residue protein sequence, read N- to C-terminus: Sec-independent protein translocase protein TatA (77 aa).

A helical transmembrane segment spans residues 1–21 (MGSLSIWHWIVVIAVVLLLFG). A compositionally biased stretch (basic and acidic residues) spans 43-60 (MQDDDKAPEKTEPVKSID). The tract at residues 43–77 (MQDDDKAPEKTEPVKSIDHGATPSATRTDVGSKAV) is disordered.

This sequence belongs to the TatA/E family. In terms of assembly, the Tat system comprises two distinct complexes: a TatABC complex, containing multiple copies of TatA, TatB and TatC subunits, and a separate TatA complex, containing only TatA subunits. Substrates initially bind to the TatABC complex, which probably triggers association of the separate TatA complex to form the active translocon.

Its subcellular location is the cell inner membrane. Its function is as follows. Part of the twin-arginine translocation (Tat) system that transports large folded proteins containing a characteristic twin-arginine motif in their signal peptide across membranes. TatA could form the protein-conducting channel of the Tat system. This Bradyrhizobium sp. (strain BTAi1 / ATCC BAA-1182) protein is Sec-independent protein translocase protein TatA.